We begin with the raw amino-acid sequence, 417 residues long: Phosphoglycerate kinase (417 aa).

(2R)-3-phosphoglycerate is bound by residues Val-23, Asp-24, Phe-25, Asn-26, Gln-39, Arg-40, Ser-63, His-64, Gly-66, Arg-67, Leu-122, Arg-123, His-170, and Arg-171. Gly-214 lines the ADP pocket. Gly-214 lines the CDP pocket. AMP-binding residues include Ala-215 and Lys-216. Ala-215 contacts ATP. Ala-215 serves as a coordination point for Mg(2+). A CDP-binding site is contributed by Asp-219. A Mg(2+)-binding site is contributed by Asp-219. Residue Lys-220 participates in AMP binding. Residue Lys-220 coordinates ATP. Gly-238 provides a ligand contact to ADP. Gly-238 lines the CDP pocket. 2 residues coordinate AMP: Ala-239 and Gly-313. ATP contacts are provided by Ala-239 and Gly-313. CDP is bound by residues Gly-338 and Phe-343. Residue Phe-343 coordinates ADP. Glu-344 provides a ligand contact to AMP. ATP-binding residues include Glu-344, Asp-375, and Thr-376. Asp-375 is a Mg(2+) binding site.

This sequence belongs to the phosphoglycerate kinase family. As to quaternary structure, monomer. The cofactor is Mg(2+).

The protein localises to the cytoplasm. It localises to the mitochondrion. It catalyses the reaction (2R)-3-phosphoglycerate + ATP = (2R)-3-phospho-glyceroyl phosphate + ADP. Its pathway is carbohydrate degradation; glycolysis; pyruvate from D-glyceraldehyde 3-phosphate: step 2/5. Functionally, catalyzes one of the two ATP producing reactions in the glycolytic pathway via the reversible conversion of 1,3-diphosphoglycerate to 3-phosphoglycerate. Both L- and D- forms of purine and pyrimidine nucleotides can be used as substrates, but the activity is much lower on pyrimidines. Negatively regulates the biosynthesis of acetyl-CoA from pyruvate in the mitochondrion. The sequence is that of Phosphoglycerate kinase (pgkA) from Aspergillus oryzae (strain ATCC 42149 / RIB 40) (Yellow koji mold).